A 149-amino-acid chain; its full sequence is Putative sugar phosphate isomerase YwlF (149 aa).

His9 is a substrate binding site. The active-site Proton acceptor is the Cys66. Position 67–72 (67–72 (GTGIGM)) interacts with substrate. The active-site Proton donor is the His99. Residue Arg133 coordinates substrate.

This sequence belongs to the LacAB/RpiB family.

This Bacillus subtilis (strain 168) protein is Putative sugar phosphate isomerase YwlF (ywlF).